We begin with the raw amino-acid sequence, 346 residues long: UDP-3-O-acylglucosamine N-acyltransferase (346 aa).

His-253 serves as the catalytic Proton acceptor.

This sequence belongs to the transferase hexapeptide repeat family. LpxD subfamily. In terms of assembly, homotrimer.

It carries out the reaction a UDP-3-O-[(3R)-3-hydroxyacyl]-alpha-D-glucosamine + a (3R)-hydroxyacyl-[ACP] = a UDP-2-N,3-O-bis[(3R)-3-hydroxyacyl]-alpha-D-glucosamine + holo-[ACP] + H(+). Its pathway is bacterial outer membrane biogenesis; LPS lipid A biosynthesis. Catalyzes the N-acylation of UDP-3-O-acylglucosamine using 3-hydroxyacyl-ACP as the acyl donor. Is involved in the biosynthesis of lipid A, a phosphorylated glycolipid that anchors the lipopolysaccharide to the outer membrane of the cell. The sequence is that of UDP-3-O-acylglucosamine N-acyltransferase from Rickettsia prowazekii (strain Madrid E).